Reading from the N-terminus, the 329-residue chain is DNA-directed RNA polymerase subunit alpha (329 aa).

Residues 1 to 235 are alpha N-terminal domain (alpha-NTD); the sequence is MLGSVTDFLK…EQLDAFVDLR (235 aa). The segment at 249–329 is alpha C-terminal domain (alpha-CTD); that stretch reads FDPILLRPVD…NWPPASLADN (81 aa).

This sequence belongs to the RNA polymerase alpha chain family. In terms of assembly, homodimer. The RNAP catalytic core consists of 2 alpha, 1 beta, 1 beta' and 1 omega subunit. When a sigma factor is associated with the core the holoenzyme is formed, which can initiate transcription.

It catalyses the reaction RNA(n) + a ribonucleoside 5'-triphosphate = RNA(n+1) + diphosphate. Its function is as follows. DNA-dependent RNA polymerase catalyzes the transcription of DNA into RNA using the four ribonucleoside triphosphates as substrates. The sequence is that of DNA-directed RNA polymerase subunit alpha from Tolumonas auensis (strain DSM 9187 / NBRC 110442 / TA 4).